The following is a 212-amino-acid chain: Orotate phosphoribosyltransferase (212 aa).

Lysine 26 lines the 5-phospho-alpha-D-ribose 1-diphosphate pocket. An orotate-binding site is contributed by 34-35; sequence FF. 5-phospho-alpha-D-ribose 1-diphosphate-binding positions include 72 to 73, arginine 99, lysine 100, lysine 103, histidine 105, and 124 to 132; these read YK and DDVITVGTA. Residues threonine 128 and arginine 156 each coordinate orotate.

It belongs to the purine/pyrimidine phosphoribosyltransferase family. PyrE subfamily. Homodimer. The cofactor is Mg(2+).

The catalysed reaction is orotidine 5'-phosphate + diphosphate = orotate + 5-phospho-alpha-D-ribose 1-diphosphate. The protein operates within pyrimidine metabolism; UMP biosynthesis via de novo pathway; UMP from orotate: step 1/2. Functionally, catalyzes the transfer of a ribosyl phosphate group from 5-phosphoribose 1-diphosphate to orotate, leading to the formation of orotidine monophosphate (OMP). The polypeptide is Orotate phosphoribosyltransferase (Ruthia magnifica subsp. Calyptogena magnifica).